Consider the following 503-residue polypeptide: Envelope glycoprotein p57 (503 aa).

An N-terminal signal peptide occupies residues 1–22; the sequence is MQLSMSFLIGFGTLVLALSART. Residues 23 to 467 lie on the Extracellular side of the membrane; sequence FDLQGLSCNT…FLNPLGWLRD (445 aa). 9 N-linked (GlcNAc...) asparagine; by host glycosylation sites follow: Asn63, Asn109, Asn139, Asn192, Asn196, Asn202, Asn221, Asn230, and Asn235. A fusion peptide region spans residues 274-315; sequence ILQSLLLGVFGTGIASASQFLRGWLNHPDIIGYIVNGVGVVW. Residues Asn321, Asn328, Asn388, and Asn438 are each glycosylated (N-linked (GlcNAc...) asparagine; by host). The helical transmembrane segment at 468–488 threads the bilayer; the sequence is LLAWAAWLGGVLYLISLCVSL. The Cytoplasmic segment spans residues 489-503; that stretch reads PASFARRRRLGRWQE.

Post-translationally, glycosated; Stabilizes it. A portion of p57 is cleaved into p27 and p29. p27 and p29 are called gp43 when glycosylated, as they seem to have the same molecular weight.

Its subcellular location is the host endoplasmic reticulum membrane. The protein localises to the virion. The protein resides in the host cell membrane. Its function is as follows. Unprocessed envelope protein p57 is thought to be involved in attachment of the virus to its cell surface receptor. This attachment induces virion internalization predominantly through clathrin-dependent endocytosis. Functionally, envelope protein p27 and p29 presumably linked by disulfide bond are the viral type II fusion protein, involved in pH-dependent fusion within early endosomes after internalization of the virion by endocytosis. The polypeptide is Envelope glycoprotein p57 (G) (Borna disease virus 1 (BoDV-1)).